Consider the following 269-residue polypeptide: Formamidopyrimidine-DNA glycosylase (269 aa).

Pro2 (schiff-base intermediate with DNA) is an active-site residue. The active-site Proton donor is Glu3. Lys57 acts as the Proton donor; for beta-elimination activity in catalysis. The DNA site is built by His90, Arg109, and Lys150. The FPG-type zinc-finger motif lies at 235–269 (QVYGRGGEPCRVCGTPIQMAKHGQRSTFFCPACQH). The Proton donor; for delta-elimination activity role is filled by Arg259.

It belongs to the FPG family. In terms of assembly, monomer. It depends on Zn(2+) as a cofactor.

The enzyme catalyses Hydrolysis of DNA containing ring-opened 7-methylguanine residues, releasing 2,6-diamino-4-hydroxy-5-(N-methyl)formamidopyrimidine.. It catalyses the reaction 2'-deoxyribonucleotide-(2'-deoxyribose 5'-phosphate)-2'-deoxyribonucleotide-DNA = a 3'-end 2'-deoxyribonucleotide-(2,3-dehydro-2,3-deoxyribose 5'-phosphate)-DNA + a 5'-end 5'-phospho-2'-deoxyribonucleoside-DNA + H(+). In terms of biological role, involved in base excision repair of DNA damaged by oxidation or by mutagenic agents. Acts as a DNA glycosylase that recognizes and removes damaged bases. Has a preference for oxidized purines, such as 7,8-dihydro-8-oxoguanine (8-oxoG). Has AP (apurinic/apyrimidinic) lyase activity and introduces nicks in the DNA strand. Cleaves the DNA backbone by beta-delta elimination to generate a single-strand break at the site of the removed base with both 3'- and 5'-phosphates. The chain is Formamidopyrimidine-DNA glycosylase from Sodalis glossinidius (strain morsitans).